The primary structure comprises 141 residues: Nucleoside diphosphate kinase (141 aa).

Lysine 11, phenylalanine 59, arginine 87, threonine 93, arginine 104, and asparagine 114 together coordinate ATP. Histidine 117 serves as the catalytic Pros-phosphohistidine intermediate.

Belongs to the NDK family. Homotetramer. Mg(2+) serves as cofactor.

It is found in the cytoplasm. It carries out the reaction a 2'-deoxyribonucleoside 5'-diphosphate + ATP = a 2'-deoxyribonucleoside 5'-triphosphate + ADP. It catalyses the reaction a ribonucleoside 5'-diphosphate + ATP = a ribonucleoside 5'-triphosphate + ADP. In terms of biological role, major role in the synthesis of nucleoside triphosphates other than ATP. The ATP gamma phosphate is transferred to the NDP beta phosphate via a ping-pong mechanism, using a phosphorylated active-site intermediate. The chain is Nucleoside diphosphate kinase from Nitrosomonas europaea (strain ATCC 19718 / CIP 103999 / KCTC 2705 / NBRC 14298).